The sequence spans 329 residues: NADH-quinone oxidoreductase subunit H 2 (329 aa).

Helical transmembrane passes span 12–32 (GAKIALIFFVVLTLAAYLVFA), 78–98 (WLFYLAPAMAAVPAILTFAVI), 120–140 (VGLLFFLALSSIAVYGVALGG), 159–179 (LISYELSMGLSLVPTVMLAGS), 191–211 (GVWFIAYQPVAFLIFLISIAA), 242–262 (LFFVGEYINIIVLGGLATTFF), 270–290 (LLPPFVWFSVKTLAFAFFFIW), and 309–329 (KVLTPLALLNILITGWVLMFV).

This sequence belongs to the complex I subunit 1 family. In terms of assembly, NDH-1 is composed of 14 different subunits. Subunits NuoA, H, J, K, L, M, N constitute the membrane sector of the complex.

The protein resides in the cell inner membrane. The catalysed reaction is a quinone + NADH + 5 H(+)(in) = a quinol + NAD(+) + 4 H(+)(out). In terms of biological role, NDH-1 shuttles electrons from NADH, via FMN and iron-sulfur (Fe-S) centers, to quinones in the respiratory chain. The immediate electron acceptor for the enzyme in this species is believed to be ubiquinone. Couples the redox reaction to proton translocation (for every two electrons transferred, four hydrogen ions are translocated across the cytoplasmic membrane), and thus conserves the redox energy in a proton gradient. This subunit may bind ubiquinone. This chain is NADH-quinone oxidoreductase subunit H 2, found in Geobacter sulfurreducens (strain ATCC 51573 / DSM 12127 / PCA).